We begin with the raw amino-acid sequence, 385 residues long: Leucine aminopeptidase 1 (385 aa).

The signal sequence occupies residues 1-19 (MKFPSFLSLGIAASTTALA). A propeptide spanning residues 20 to 87 (ALPDQKPIGD…FPRAFAKTAV (68 aa)) is cleaved from the precursor. Asn-177 carries N-linked (GlcNAc...) asparagine glycosylation. Residues His-185 and Asp-204 each contribute to the Zn(2+) site. An N-linked (GlcNAc...) asparagine glycan is attached at Asn-229. 2 residues coordinate Zn(2+): Glu-243 and Asp-270. Cysteines 319 and 323 form a disulfide. A Zn(2+)-binding site is contributed by His-352.

This sequence belongs to the peptidase M28 family. M28E subfamily. In terms of assembly, monomer. The cofactor is Zn(2+).

It is found in the secreted. In terms of biological role, extracellular aminopeptidase that allows assimilation of proteinaceous substrates. The protein is Leucine aminopeptidase 1 (LAP1) of Blastomyces gilchristii (strain SLH14081) (Blastomyces dermatitidis).